The sequence spans 257 residues: 3-methyl-2-oxobutanoate hydroxymethyltransferase (257 aa).

Mg(2+) is bound by residues Asp42 and Asp86. 3-methyl-2-oxobutanoate contacts are provided by residues 42–43, Asp86, and Lys116; that span reads DS. Glu118 serves as a coordination point for Mg(2+). The active-site Proton acceptor is the Glu185.

It belongs to the PanB family. As to quaternary structure, homodecamer; pentamer of dimers. Mg(2+) serves as cofactor.

Its subcellular location is the cytoplasm. The catalysed reaction is 3-methyl-2-oxobutanoate + (6R)-5,10-methylene-5,6,7,8-tetrahydrofolate + H2O = 2-dehydropantoate + (6S)-5,6,7,8-tetrahydrofolate. Its pathway is cofactor biosynthesis; (R)-pantothenate biosynthesis; (R)-pantoate from 3-methyl-2-oxobutanoate: step 1/2. In terms of biological role, catalyzes the reversible reaction in which hydroxymethyl group from 5,10-methylenetetrahydrofolate is transferred onto alpha-ketoisovalerate to form ketopantoate. This is 3-methyl-2-oxobutanoate hydroxymethyltransferase from Prochlorococcus marinus (strain MIT 9312).